A 299-amino-acid polypeptide reads, in one-letter code: CCR4-NOT transcription complex subunit 9 (299 aa).

Residue methionine 1 is modified to N-acetylmethionine.

It belongs to the CNOT9 family. As to quaternary structure, homodimer. Component of the CCR4-NOT complex; distinct complexes seem to exist that differ in the participation of probably mutually exclusive catalytic subunits. Interacts with MYB, ATF2, RARA, RARB, RARG, RXRA, RXRB and RXRG. Identified in a complex with ATF2 bound to target DNA. Interacts with NANOS2. Directly interacts with ZNF335. As to expression, detected in spleen, thymus, prostate, testis, ovary and intestine.

The protein resides in the nucleus. It is found in the cytoplasm. It localises to the P-body. In terms of biological role, component of the CCR4-NOT complex which is one of the major cellular mRNA deadenylases and is linked to various cellular processes including bulk mRNA degradation, miRNA-mediated repression, translational repression during translational initiation and general transcription regulation. Additional complex functions may be a consequence of its influence on mRNA expression. Involved in down-regulation of MYB- and JUN-dependent transcription. May play a role in cell differentiation. Can bind oligonucleotides, such as poly-G, poly-C or poly-T (in vitro), but the physiological relevance of this is not certain. Does not bind poly-A. Enhances ligand-dependent transcriptional activity of nuclear hormone receptors, including RARA, expect ESR1-mediated transcription that is not only slightly increased, if at all. The chain is CCR4-NOT transcription complex subunit 9 from Homo sapiens (Human).